The chain runs to 317 residues: L-lactate dehydrogenase (317 aa).

NAD(+) is bound by residues V18, D39, K44, Y69, and 83-84 (GA). Substrate contacts are provided by residues Q86, R92, and 124 to 127 (NPVD). NAD(+)-binding positions include 122 to 124 (VTN) and S147. 152-155 (DTAR) is a substrate binding site. Residues R157 and H172 each coordinate beta-D-fructose 1,6-bisphosphate. Catalysis depends on H179, which acts as the Proton acceptor. Y225 bears the Phosphotyrosine mark. A substrate-binding site is contributed by T234.

The protein belongs to the LDH/MDH superfamily. LDH family. In terms of assembly, homotetramer.

It is found in the cytoplasm. It carries out the reaction (S)-lactate + NAD(+) = pyruvate + NADH + H(+). The protein operates within fermentation; pyruvate fermentation to lactate; (S)-lactate from pyruvate: step 1/1. Its activity is regulated as follows. Allosterically activated by fructose 1,6-bisphosphate (FBP). Catalyzes the conversion of lactate to pyruvate. The sequence is that of L-lactate dehydrogenase from Acetivibrio thermocellus (strain ATCC 27405 / DSM 1237 / JCM 9322 / NBRC 103400 / NCIMB 10682 / NRRL B-4536 / VPI 7372) (Clostridium thermocellum).